Reading from the N-terminus, the 388-residue chain is Non-structural maintenance of chromosome element 5 (388 aa).

Component of the smc5/smc6 complex which consists of two subcomplexes, smc5-smc6-nse2 and nse1-nse2-nse4. Interacts with nse6 and rfp1.

The protein localises to the cytoplasm. Its subcellular location is the nucleus. The protein resides in the chromosome. Its function is as follows. Acts in a DNA repair pathway for removal of UV-induced DNA damage that is distinct from classical nucleotide excision repair and in repair of ionizing radiation damage. Functions in homologous recombination repair of DNA double strand breaks and in recovery of stalled replication forks. May prevent formation of excessive Holliday junctions or assist in their resolution. The protein is Non-structural maintenance of chromosome element 5 (nse5) of Schizosaccharomyces pombe (strain 972 / ATCC 24843) (Fission yeast).